The chain runs to 154 residues: Leghemoglobin-1 (154 aa).

The Globin domain maps to 3 to 151 (VLTDVQVALV…LAIIIKKEMK (149 aa)). Residue S46 coordinates heme b. At S46 the chain carries Phosphoserine. An O2-binding site is contributed by H64. Positions 67, 98, and 101 each coordinate heme b. Y139 is subject to Nitrated tyrosine.

It belongs to the plant globin family. As to quaternary structure, monomer. Nitrated in effective nodules and particularly in hypoxic conditions; this mechanism may play a protective role in the symbiosis by buffering toxic peroxynitrite NO(2)(-). Nitration level decrease during nodule senescence. In terms of processing, phosphorylation at Ser-46 disrupts the molecular environment of its porphyrin ring oxygen binding pocket, thus leading to a reduced oxygen consumption and to the delivery of oxygen O(2) to symbiosomes. As to expression, accumulates in developing root nodules and present in roots, especially in the upper part. Detected in leaves at low levels.

Its subcellular location is the cytoplasm. It is found in the cytosol. The protein localises to the nucleus. In terms of biological role, leghemoglobin that reversibly binds oxygen O(2) through a pentacoordinated heme iron. In root nodules, facilitates the diffusion of oxygen to the bacteroids while preventing the bacterial nitrogenase from being inactivated by buffering dioxygen, nitric oxide and carbon monoxide, and promoting the formation of reactive oxygen species (ROS, e.g. H(2)O(2)). This role is essential for symbiotic nitrogen fixation (SNF). The protein is Leghemoglobin-1 of Lupinus luteus (European yellow lupine).